Reading from the N-terminus, the 648-residue chain is Fidgetin-like protein 2 (648 aa).

Residues 1–36 are disordered; it reads MHWTPEHAQPLNQWPEQHLDVSSTTPSPAHKLELPP. Positions 10–27 are enriched in polar residues; it reads PLNQWPEQHLDVSSTTPS. ATP contacts are provided by residues Ala394 and 434 to 439; that span reads GCGKAL.

It belongs to the AAA ATPase family. The cofactor is Mg(2+).

It is found in the cytoplasm. The protein resides in the cell cortex. The enzyme catalyses ATP + H2O = ADP + phosphate + H(+). Its function is as follows. Microtubule-severing enzyme that negatively regulates cell migration and wound healing. In migrating cells, targets dynamic microtubules (MTs) at the leading edge and severs them, thereby suppressing motility. Microtubule severing releases ARHGEF2 which activates RHOA, which in turn regulates focal ahesion turnover via focal adhesion kinase, as opposed to F-actin polymerization, to suppress cell motility. Negative regulator of axon regeneration that suppresses axonal growth by selectively severing dynamic MTs in the distal axon shaft and growth cone. Contributes to proper cell branching during endothelial and neuronal development. The sequence is that of Fidgetin-like protein 2 (Fignl2) from Rattus norvegicus (Rat).